The following is a 138-amino-acid chain: Aspartate 1-decarboxylase (138 aa).

The Schiff-base intermediate with substrate; via pyruvic acid role is filled by S25. Residue S25 is modified to Pyruvic acid (Ser). Residue T57 participates in substrate binding. The active-site Proton donor is the Y58. A substrate-binding site is contributed by 73-75 (GAA). The interval 116–138 (ELGGDPAQVPDGSGLKNPRHPEA) is disordered.

This sequence belongs to the PanD family. As to quaternary structure, heterooctamer of four alpha and four beta subunits. Pyruvate is required as a cofactor. Is synthesized initially as an inactive proenzyme, which is activated by self-cleavage at a specific serine bond to produce a beta-subunit with a hydroxyl group at its C-terminus and an alpha-subunit with a pyruvoyl group at its N-terminus.

It localises to the cytoplasm. The enzyme catalyses L-aspartate + H(+) = beta-alanine + CO2. It participates in cofactor biosynthesis; (R)-pantothenate biosynthesis; beta-alanine from L-aspartate: step 1/1. Functionally, catalyzes the pyruvoyl-dependent decarboxylation of aspartate to produce beta-alanine. The chain is Aspartate 1-decarboxylase from Corynebacterium jeikeium (strain K411).